Here is a 351-residue protein sequence, read N- to C-terminus: UDP-3-O-acylglucosamine N-acyltransferase (351 aa).

Histidine 240 (proton acceptor) is an active-site residue.

This sequence belongs to the transferase hexapeptide repeat family. LpxD subfamily. As to quaternary structure, homotrimer.

It carries out the reaction a UDP-3-O-[(3R)-3-hydroxyacyl]-alpha-D-glucosamine + a (3R)-hydroxyacyl-[ACP] = a UDP-2-N,3-O-bis[(3R)-3-hydroxyacyl]-alpha-D-glucosamine + holo-[ACP] + H(+). It functions in the pathway bacterial outer membrane biogenesis; LPS lipid A biosynthesis. Functionally, catalyzes the N-acylation of UDP-3-O-acylglucosamine using 3-hydroxyacyl-ACP as the acyl donor. Is involved in the biosynthesis of lipid A, a phosphorylated glycolipid that anchors the lipopolysaccharide to the outer membrane of the cell. The polypeptide is UDP-3-O-acylglucosamine N-acyltransferase (Ectopseudomonas mendocina (strain ymp) (Pseudomonas mendocina)).